The chain runs to 1270 residues: Myosin-binding protein C, cardiac-type (1270 aa).

Met1 bears the N-acetylmethionine mark. Residues 1–24 (MPEPGKKPVSAFNKKPRSAEVTAG) form a disordered region. Ser47 and Ser72 each carry phosphoserine. Over residues 94-105 (VTEPAPPEKAES) the composition is skewed to basic and acidic residues. Positions 94–152 (VTEPAPPEKAESEVAPGAPEEVPAPATELEESVSSPEGSVSVTQDGSAAEHQGAPDDPI) are disordered. Residues 106-135 (EVAPGAPEEVPAPATELEESVSSPEGSVSV) show a composition bias toward low complexity. Residues 151–254 (PIGLFLMRPQ…FDSCNFNLTV (104 aa)) enclose the Ig-like C2-type 1 domain. Zn(2+)-binding residues include Gln206, His208, Glu221, and His223. Phosphoserine; by PKA and PKC is present on residues Ser273, Ser282, and Ser302. Phosphoserine occurs at positions 307 and 423. Ig-like C2-type domains lie at 358–448 (STAF…VKEP), 449–539 (PVLI…VQEK), 540–629 (KLEV…HFME), and 641–767 (PKIH…VIDV). An intrachain disulfide couples Cys432 to Cys439. Phosphoserine occurs at positions 455 and 546. Thr603 bears the Phosphothreonine mark. Residues 683–702 (VTQGKKASAGPHPDAPEDAG) form a disordered region. 2 consecutive Fibronectin type-III domains span residues 770-866 (APAA…IGPP) and 868-963 (EPTH…VQEI). In terms of domain architecture, Ig-like C2-type 6 spans 967-1061 (PRLQLPRHLR…ATLILQIVDK (95 aa)). Residues 1064 to 1159 (PPQDIRIVET…TKEPVFIPRP (96 aa)) enclose the Fibronectin type-III 3 domain. Positions 1177–1270 (PSFTQPLANR…ECRLEVRVPQ (94 aa)) constitute an Ig-like C2-type 7 domain. An Omega-N-methylarginine modification is found at Arg1237.

Belongs to the immunoglobulin superfamily. MyBP family. In terms of processing, substrate for phosphorylation by PKA and PKC. Reversible phosphorylation appears to modulate contraction. Polyubiquitinated.

In terms of biological role, thick filament-associated protein located in the crossbridge region of vertebrate striated muscle a bands. In vitro it binds MHC, F-actin and native thin filaments, and modifies the activity of actin-activated myosin ATPase. It may modulate muscle contraction or may play a more structural role. This Mus musculus (Mouse) protein is Myosin-binding protein C, cardiac-type (Mybpc3).